The chain runs to 315 residues: Ribosomal RNA small subunit methyltransferase H (315 aa).

S-adenosyl-L-methionine contacts are provided by residues 35-37, D55, F80, D102, and Q109; that span reads GGH.

Belongs to the methyltransferase superfamily. RsmH family.

Its subcellular location is the cytoplasm. It carries out the reaction cytidine(1402) in 16S rRNA + S-adenosyl-L-methionine = N(4)-methylcytidine(1402) in 16S rRNA + S-adenosyl-L-homocysteine + H(+). Specifically methylates the N4 position of cytidine in position 1402 (C1402) of 16S rRNA. The sequence is that of Ribosomal RNA small subunit methyltransferase H from Shewanella halifaxensis (strain HAW-EB4).